Consider the following 186-residue polypeptide: LSM12 homolog B (186 aa).

Positions 1 to 74 (MSSLAPCFTV…CMDIEIVKEA (74 aa)) constitute a Sm domain. Residues 84-186 (EPIDLPMIRE…VVQNFCSKQF (103 aa)) enclose the AD domain.

The protein belongs to the LSM12 family. In terms of assembly, interacts with Sbat; along with Sbat and Vlet, may form an accessory subcomplex involved in SMN complex function.

In terms of biological role, may have an accessory function in the survival motor neuron (SMN) complex. This is LSM12 homolog B from Drosophila melanogaster (Fruit fly).